The sequence spans 229 residues: Uracil-DNA glycosylase (229 aa).

Asp-65 (proton acceptor) is an active-site residue.

Belongs to the uracil-DNA glycosylase (UDG) superfamily. UNG family.

Its subcellular location is the cytoplasm. The catalysed reaction is Hydrolyzes single-stranded DNA or mismatched double-stranded DNA and polynucleotides, releasing free uracil.. In terms of biological role, excises uracil residues from the DNA which can arise as a result of misincorporation of dUMP residues by DNA polymerase or due to deamination of cytosine. The polypeptide is Uracil-DNA glycosylase (Brevibacillus brevis (strain 47 / JCM 6285 / NBRC 100599)).